The primary structure comprises 458 residues: tRNA modification GTPase MnmE (458 aa).

Positions 22, 84, and 123 each coordinate (6S)-5-formyl-5,6,7,8-tetrahydrofolate. Residues 220 to 379 form the TrmE-type G domain; the sequence is GIATAIIGRP…LEKAIADLFF (160 aa). N230 lines the K(+) pocket. Residues 230 to 235, 249 to 255, and 274 to 277 contribute to the GTP site; these read NVGKSS, TDIAGTT, and DTAG. Position 234 (S234) interacts with Mg(2+). K(+)-binding residues include T249, I251, and T254. T255 lines the Mg(2+) pocket. Residue K458 participates in (6S)-5-formyl-5,6,7,8-tetrahydrofolate binding.

Belongs to the TRAFAC class TrmE-Era-EngA-EngB-Septin-like GTPase superfamily. TrmE GTPase family. As to quaternary structure, homodimer. Heterotetramer of two MnmE and two MnmG subunits. The cofactor is K(+).

The protein localises to the cytoplasm. Exhibits a very high intrinsic GTPase hydrolysis rate. Involved in the addition of a carboxymethylaminomethyl (cmnm) group at the wobble position (U34) of certain tRNAs, forming tRNA-cmnm(5)s(2)U34. The chain is tRNA modification GTPase MnmE from Bacillus thuringiensis (strain Al Hakam).